The primary structure comprises 363 residues: Glycerol-3-phosphate dehydrogenase [NAD(+)], cytoplasmic (363 aa).

Residues 11–16 (GSGNWG), phenylalanine 98, lysine 121, and alanine 155 each bind NAD(+). A substrate-binding site is contributed by lysine 121. Lysine 206 acts as the Proton acceptor in catalysis. Residues arginine 270 and glutamine 299 each contribute to the NAD(+) site. A substrate-binding site is contributed by 270–271 (RN).

Belongs to the NAD-dependent glycerol-3-phosphate dehydrogenase family. As to quaternary structure, homodimer. As to expression, isoform GPDH-1 is predominant in thorax and isoform GPDH-3 in abdomen.

Its subcellular location is the cytoplasm. The catalysed reaction is sn-glycerol 3-phosphate + NAD(+) = dihydroxyacetone phosphate + NADH + H(+). It participates in phospholipid metabolism; alpha-glycerophosphate cycle. The polypeptide is Glycerol-3-phosphate dehydrogenase [NAD(+)], cytoplasmic (Drosophila melanogaster (Fruit fly)).